Here is a 569-residue protein sequence, read N- to C-terminus: Urease subunit beta (569 aa).

One can recognise a Urease domain in the interval 131 to 569 (GGIDTHIHFI…VSLAQLFSIF (439 aa)). 3 residues coordinate Ni(2+): histidine 136, histidine 138, and lysine 219. An N6-carboxylysine modification is found at lysine 219. Position 221 (histidine 221) interacts with substrate. 2 residues coordinate Ni(2+): histidine 248 and histidine 274. Histidine 322 functions as the Proton donor in the catalytic mechanism. Residue aspartate 362 coordinates Ni(2+).

Belongs to the metallo-dependent hydrolases superfamily. Urease alpha subunit family. As to quaternary structure, heterohexamer of 3 UreA (alpha) and 3 UreB (beta) subunits. It depends on Ni cation as a cofactor. Post-translationally, carboxylation allows a single lysine to coordinate two nickel ions.

It localises to the cytoplasm. The enzyme catalyses urea + 2 H2O + H(+) = hydrogencarbonate + 2 NH4(+). Its pathway is nitrogen metabolism; urea degradation; CO(2) and NH(3) from urea (urease route): step 1/1. This is Urease subunit beta from Helicobacter pylori (strain P12).